The chain runs to 212 residues: Thymidylate kinase (212 aa).

An ATP-binding site is contributed by 11-18 (GPEGAGKT).

It belongs to the thymidylate kinase family.

The catalysed reaction is dTMP + ATP = dTDP + ADP. Phosphorylation of dTMP to form dTDP in both de novo and salvage pathways of dTTP synthesis. This is Thymidylate kinase from Streptococcus pneumoniae (strain Hungary19A-6).